A 1866-amino-acid chain; its full sequence is Rho GTPase-activating protein 100F (1866 aa).

Disordered stretches follow at residues 22-98, 262-336, and 466-530; these read MLCC…AGVK, RRGN…NNYS, and LRSS…DTEA. Positions 59–77 are enriched in low complexity; sequence GNQQHHGNQQHHGNQQQHH. One can recognise a PDZ domain in the interval 179–264; that stretch reads LVEIVKRPGQ…LVLAIRQRRG (86 aa). Residues 271-286 show a composition bias toward pro residues; the sequence is PGPPTLSRPEQKPPPV. Residues 301–326 show a composition bias toward basic and acidic residues; sequence TDRMPRPRSSRDRRTGDGREMTESRS. Ser-719 carries the phosphoserine modification. The segment at 745-775 is disordered; that stretch reads AGPASPSGSILSTGGHQSPAPTPSATLPRPH. Polar residues predominate over residues 750-760; it reads PSGSILSTGGH. The C2 domain maps to 789-908; the sequence is KLDKPIVDIG…LRQSPLHQLA (120 aa). One can recognise a Rho-GAP domain in the interval 948–1148; that stretch reads ADLETVVNRE…YLLQIWPQPQ (201 aa). Disordered regions lie at residues 1273 to 1328, 1356 to 1380, 1393 to 1479, 1514 to 1607, 1644 to 1727, and 1819 to 1840; these read GGSV…QVKI, PTTQ…RRGN, SVVN…DLVS, FTPI…MVST, YTND…YGTL, and DEKP…ADKG. Residues 1282–1292 are compositionally biased toward pro residues; that stretch reads DPSPLPLPGTP. Positions 1293 to 1302 are enriched in low complexity; sequence SPGSSSASTG. Polar residues-rich tracts occupy residues 1356-1377, 1393-1408, and 1416-1429; these read PTTQ…TASR, SVVN…YTGS, and GNSS…NASG. Positions 1443-1479 are enriched in low complexity; that stretch reads SSATSSSSSSQATVLSAGSTATSAPTTSSDDSDDLVS. The span at 1538-1587 shows a compositional bias: polar residues; that stretch reads QLVTPISGSSSKPGATTGAISKYTTGSVESSINANSQKLSSPSRLCNSKD. 2 stretches are compositionally biased toward low complexity: residues 1590 to 1607 and 1644 to 1658; these read SRTG…MVST and YTND…SSKS. A compositionally biased stretch (gly residues) spans 1659–1670; the sequence is GIGGGSGTGLGA. Composition is skewed to low complexity over residues 1671-1688 and 1696-1720; these read VSGA…LFGS and GSSH…NHNT. Over residues 1830–1839 the composition is skewed to basic and acidic residues; sequence HGEEKLGADK.

As to quaternary structure, interacts (via PDZ domain) with Nrx-1; may recruit Nrx-1 to the presynaptic active zone.

It localises to the presynapse. GTPase activator for the Rho-type GTPases by converting them to an inactive GDP-bound state. Promotes the anchoring of Liprin-alpha clusters at synapses. Recruits and keeps Nrx-1 levels high in active zones in the presynapse opposite the postsynaptic region. The polypeptide is Rho GTPase-activating protein 100F (RhoGAP100F) (Drosophila melanogaster (Fruit fly)).